A 410-amino-acid polypeptide reads, in one-letter code: Schlafen-like protein 1 (410 aa).

Disordered stretches follow at residues 1 to 20 (MSLRKRSAQTQMWESPVMSQ) and 141 to 199 (LHHR…SGVR). A compositionally biased stretch (polar residues) spans 8-20 (AQTQMWESPVMSQ). Positions 154–173 (SHSPGPSPGPSPGLRHPPLP) are enriched in pro residues. 264–271 (GVEDSGLV) serves as a coordination point for ATP. Positions 370–401 (QKWAMELGKLEEKVKVLTLEKEQLQQQLRQRQ) form a coiled coil.

It belongs to the Schlafen family. Subgroup I subfamily.

This chain is Schlafen-like protein 1 (Slfnl1), found in Mus musculus (Mouse).